The primary structure comprises 72 residues: MLAQKQKLAPIGINQKIDYKDIDLLKLFITEQGKILPRRATGVTVQQQRQLAKAIKRARILSLLPFVASNEL.

This sequence belongs to the bacterial ribosomal protein bS18 family. In terms of assembly, part of the 30S ribosomal subunit.

Its subcellular location is the plastid. The protein localises to the chloroplast. This Thalassiosira pseudonana (Marine diatom) protein is Small ribosomal subunit protein bS18c.